A 71-amino-acid chain; its full sequence is Large ribosomal subunit protein bL31 (71 aa).

4 residues coordinate Zn(2+): C16, C18, C36, and C39.

The protein belongs to the bacterial ribosomal protein bL31 family. Type A subfamily. Part of the 50S ribosomal subunit. Zn(2+) is required as a cofactor.

In terms of biological role, binds the 23S rRNA. In Thermus thermophilus (strain ATCC BAA-163 / DSM 7039 / HB27), this protein is Large ribosomal subunit protein bL31.